Consider the following 159-residue polypeptide: Ribonuclease H (159 aa).

The RNase H type-1 domain maps to 1-145 (MTHIRAIYTD…CDLIARRLSR (145 aa)). Mg(2+) is bound by residues aspartate 10, glutamate 49, aspartate 74, and aspartate 137.

The protein belongs to the RNase H family. Monomer. It depends on Mg(2+) as a cofactor.

The protein resides in the cytoplasm. It catalyses the reaction Endonucleolytic cleavage to 5'-phosphomonoester.. Endonuclease that specifically degrades the RNA of RNA-DNA hybrids. This Thermosynechococcus vestitus (strain NIES-2133 / IAM M-273 / BP-1) protein is Ribonuclease H.